A 590-amino-acid chain; its full sequence is Aspartate--tRNA(Asp/Asn) ligase (590 aa).

L-aspartate is bound at residue E175. The interval 199 to 202 (QQYK) is aspartate. Residues R221 and H450 each coordinate L-aspartate. ATP is bound at residue 221–223 (RDE). ATP is bound at residue E484. R491 is an L-aspartate binding site. 536 to 539 (GIDR) contacts ATP.

It belongs to the class-II aminoacyl-tRNA synthetase family. Type 1 subfamily. As to quaternary structure, homodimer.

Its subcellular location is the cytoplasm. The catalysed reaction is tRNA(Asx) + L-aspartate + ATP = L-aspartyl-tRNA(Asx) + AMP + diphosphate. In terms of biological role, aspartyl-tRNA synthetase with relaxed tRNA specificity since it is able to aspartylate not only its cognate tRNA(Asp) but also tRNA(Asn). Reaction proceeds in two steps: L-aspartate is first activated by ATP to form Asp-AMP and then transferred to the acceptor end of tRNA(Asp/Asn). The sequence is that of Aspartate--tRNA(Asp/Asn) ligase from Azorhizobium caulinodans (strain ATCC 43989 / DSM 5975 / JCM 20966 / LMG 6465 / NBRC 14845 / NCIMB 13405 / ORS 571).